Consider the following 221-residue polypeptide: Thiamine-phosphate synthase (221 aa).

4-amino-2-methyl-5-(diphosphooxymethyl)pyrimidine contacts are provided by residues 41–45 and N82; that span reads QLRDK. The Mg(2+) site is built by D83 and D102. Residue S120 coordinates 4-amino-2-methyl-5-(diphosphooxymethyl)pyrimidine. 146–148 is a 2-[(2R,5Z)-2-carboxy-4-methylthiazol-5(2H)-ylidene]ethyl phosphate binding site; it reads TPT. Residue K149 coordinates 4-amino-2-methyl-5-(diphosphooxymethyl)pyrimidine. 2-[(2R,5Z)-2-carboxy-4-methylthiazol-5(2H)-ylidene]ethyl phosphate is bound at residue G177.

Belongs to the thiamine-phosphate synthase family. It depends on Mg(2+) as a cofactor.

The enzyme catalyses 2-[(2R,5Z)-2-carboxy-4-methylthiazol-5(2H)-ylidene]ethyl phosphate + 4-amino-2-methyl-5-(diphosphooxymethyl)pyrimidine + 2 H(+) = thiamine phosphate + CO2 + diphosphate. The catalysed reaction is 2-(2-carboxy-4-methylthiazol-5-yl)ethyl phosphate + 4-amino-2-methyl-5-(diphosphooxymethyl)pyrimidine + 2 H(+) = thiamine phosphate + CO2 + diphosphate. It catalyses the reaction 4-methyl-5-(2-phosphooxyethyl)-thiazole + 4-amino-2-methyl-5-(diphosphooxymethyl)pyrimidine + H(+) = thiamine phosphate + diphosphate. It functions in the pathway cofactor biosynthesis; thiamine diphosphate biosynthesis; thiamine phosphate from 4-amino-2-methyl-5-diphosphomethylpyrimidine and 4-methyl-5-(2-phosphoethyl)-thiazole: step 1/1. Its function is as follows. Condenses 4-methyl-5-(beta-hydroxyethyl)thiazole monophosphate (THZ-P) and 2-methyl-4-amino-5-hydroxymethyl pyrimidine pyrophosphate (HMP-PP) to form thiamine monophosphate (TMP). The polypeptide is Thiamine-phosphate synthase (Mycolicibacterium vanbaalenii (strain DSM 7251 / JCM 13017 / BCRC 16820 / KCTC 9966 / NRRL B-24157 / PYR-1) (Mycobacterium vanbaalenii)).